Consider the following 101-residue polypeptide: Large ribosomal subunit protein uL24 (101 aa).

This sequence belongs to the universal ribosomal protein uL24 family. Part of the 50S ribosomal subunit.

Functionally, one of two assembly initiator proteins, it binds directly to the 5'-end of the 23S rRNA, where it nucleates assembly of the 50S subunit. In terms of biological role, one of the proteins that surrounds the polypeptide exit tunnel on the outside of the subunit. The sequence is that of Large ribosomal subunit protein uL24 from Streptococcus suis (strain 98HAH33).